An 86-amino-acid polypeptide reads, in one-letter code: UPF0147 protein PYRAB16980 (86 aa).

The protein belongs to the UPF0147 family.

In Pyrococcus abyssi (strain GE5 / Orsay), this protein is UPF0147 protein PYRAB16980.